Consider the following 462-residue polypeptide: S-alkyl-thiohydroximate lyase SUR1 (462 aa).

Belongs to the class-I pyridoxal-phosphate-dependent aminotransferase family. It depends on pyridoxal 5'-phosphate as a cofactor.

C-S lyase involved in glucosinolate biosynthesis. Converts S-(alkylacetohydroximoyl)-L-cysteine to thiohydroximate. Functions in auxin homeostasis. Probably required for glucosinolate activation in response to pathogens. This Arabidopsis thaliana (Mouse-ear cress) protein is S-alkyl-thiohydroximate lyase SUR1 (SUR1).